We begin with the raw amino-acid sequence, 329 residues long: Phenylalanine--tRNA ligase alpha subunit (329 aa).

Residue E254 participates in Mg(2+) binding.

The protein belongs to the class-II aminoacyl-tRNA synthetase family. Phe-tRNA synthetase alpha subunit type 1 subfamily. As to quaternary structure, tetramer of two alpha and two beta subunits. Mg(2+) is required as a cofactor.

It localises to the cytoplasm. The enzyme catalyses tRNA(Phe) + L-phenylalanine + ATP = L-phenylalanyl-tRNA(Phe) + AMP + diphosphate + H(+). The protein is Phenylalanine--tRNA ligase alpha subunit of Haemophilus influenzae (strain 86-028NP).